The chain runs to 424 residues: Sulfate adenylyltransferase (424 aa).

It belongs to the sulfate adenylyltransferase family.

The enzyme catalyses sulfate + ATP + H(+) = adenosine 5'-phosphosulfate + diphosphate. It participates in sulfur metabolism; hydrogen sulfide biosynthesis; sulfite from sulfate: step 1/3. The protein is Sulfate adenylyltransferase of Desulfatibacillum aliphaticivorans.